Here is a 410-residue protein sequence, read N- to C-terminus: Pyrophosphate--fructose 6-phosphate 1-phosphotransferase (410 aa).

Gly12 provides a ligand contact to diphosphate. Asp121 provides a ligand contact to Mg(2+). Substrate is bound by residues 149-151 (TID), 194-196 (MGR), Glu266, and 323-326 (YFSR). Asp151 functions as the Proton acceptor in the catalytic mechanism.

This sequence belongs to the phosphofructokinase type A (PFKA) family. PPi-dependent PFK group II subfamily. Clade 'P' sub-subfamily. As to quaternary structure, homodimer or homotetramer. The cofactor is Mg(2+).

It localises to the cytoplasm. It carries out the reaction beta-D-fructose 6-phosphate + diphosphate = beta-D-fructose 1,6-bisphosphate + phosphate + H(+). The protein operates within carbohydrate degradation; glycolysis; D-glyceraldehyde 3-phosphate and glycerone phosphate from D-glucose: step 3/4. With respect to regulation, non-allosteric. Catalyzes the phosphorylation of D-fructose 6-phosphate, the first committing step of glycolysis. Uses inorganic phosphate (PPi) as phosphoryl donor instead of ATP like common ATP-dependent phosphofructokinases (ATP-PFKs), which renders the reaction reversible, and can thus function both in glycolysis and gluconeogenesis. Consistently, PPi-PFK can replace the enzymes of both the forward (ATP-PFK) and reverse (fructose-bisphosphatase (FBPase)) reactions. The protein is Pyrophosphate--fructose 6-phosphate 1-phosphotransferase of Mastigamoeba balamuthi (Phreatamoeba balamuthi).